A 29-amino-acid polypeptide reads, in one-letter code: Cytochrome c oxidase subunit 7A2, mitochondrial (29 aa).

Lys-10 carries the N6-acetyllysine modification.

The protein belongs to the cytochrome c oxidase VIIa family. As to quaternary structure, component of the cytochrome c oxidase (complex IV, CIV), a multisubunit enzyme composed of 14 subunits. The complex is composed of a catalytic core of 3 subunits MT-CO1, MT-CO2 and MT-CO3, encoded in the mitochondrial DNA, and 11 supernumerary subunits COX4I, COX5A, COX5B, COX6A, COX6B, COX6C, COX7A, COX7B, COX7C, COX8 and NDUFA4, which are encoded in the nuclear genome. The complex exists as a monomer or a dimer and forms supercomplexes (SCs) in the inner mitochondrial membrane with NADH-ubiquinone oxidoreductase (complex I, CI) and ubiquinol-cytochrome c oxidoreductase (cytochrome b-c1 complex, complex III, CIII), resulting in different assemblies (supercomplex SCI(1)III(2)IV(1) and megacomplex MCI(2)III(2)IV(2)). Interacts with PET100.

It localises to the mitochondrion inner membrane. The protein operates within energy metabolism; oxidative phosphorylation. In terms of biological role, component of the cytochrome c oxidase, the last enzyme in the mitochondrial electron transport chain which drives oxidative phosphorylation. The respiratory chain contains 3 multisubunit complexes succinate dehydrogenase (complex II, CII), ubiquinol-cytochrome c oxidoreductase (cytochrome b-c1 complex, complex III, CIII) and cytochrome c oxidase (complex IV, CIV), that cooperate to transfer electrons derived from NADH and succinate to molecular oxygen, creating an electrochemical gradient over the inner membrane that drives transmembrane transport and the ATP synthase. Cytochrome c oxidase is the component of the respiratory chain that catalyzes the reduction of oxygen to water. Electrons originating from reduced cytochrome c in the intermembrane space (IMS) are transferred via the dinuclear copper A center (CU(A)) of subunit 2 and heme A of subunit 1 to the active site in subunit 1, a binuclear center (BNC) formed by heme A3 and copper B (CU(B)). The BNC reduces molecular oxygen to 2 water molecules using 4 electrons from cytochrome c in the IMS and 4 protons from the mitochondrial matrix. The chain is Cytochrome c oxidase subunit 7A2, mitochondrial (COX7A2) from Canis lupus familiaris (Dog).